Consider the following 537-residue polypeptide: P2Y purinoceptor 4 (537 aa).

Over 1–49 the chain is Extracellular; that stretch reads MTEDIMATSYPTFLTTPYLPMKLLMNLTNDTEDICVFDEGFKFLLLPVS. N-linked (GlcNAc...) asparagine glycans are attached at residues Asn-26 and Asn-29. Residues 50–70 form a helical membrane-spanning segment; it reads YSAVFMVGLPLNIAAMWIFIA. Over 71-79 the chain is Cytoplasmic; sequence KMRPWNPTT. The helical transmembrane segment at 80 to 100 threads the bilayer; the sequence is VYMFNLALSDTLYVLSLPTLV. Topologically, residues 101–118 are extracellular; the sequence is YYYADKNNWPFGEVLCKL. A disulfide bond links Cys-116 and Cys-193. The helical transmembrane segment at 119–139 threads the bilayer; it reads VRFLFYANLYSSILFLTCISV. Topologically, residues 140–161 are cytoplasmic; it reads HRYRGVCHPITSLRRMNAKHAY. The helical transmembrane segment at 162-182 threads the bilayer; sequence VICALVWLSVTLCLVPNLIFV. The Extracellular portion of the chain corresponds to 183–210; sequence TVSPKVKNTICHDTTRPEDFARYVEYST. The helical transmembrane segment at 211–231 threads the bilayer; sequence AIMCLLFGIPCLIIAGCYGLM. Residues 232-254 lie on the Cytoplasmic side of the membrane; sequence TRELMKPIVSGNQQTLPSYKKRS. The helical transmembrane segment at 255–275 threads the bilayer; that stretch reads IKTIIFVMIAFAICFMPFHIT. Residues 276–292 are Extracellular-facing; the sequence is RTLYYYARLLGIKCYAL. Residues 293 to 316 traverse the membrane as a helical segment; sequence NVINVTYKVTRPLASANSCIDPIL. The Cytoplasmic portion of the chain corresponds to 317-537; it reads YFLANDRYRR…EKELQNFPKA (221 aa). The segment at 401–505 is disordered; sequence NRRSTIKRNS…GEGTSTWNLL (105 aa). Basic and acidic residues-rich tracts occupy residues 409 to 423 and 431 to 447; these read NSTD…RHGE and VVEK…RKTT. Residues 448–465 show a composition bias toward polar residues; sequence EQSSKTNAEQDELQTQID.

This sequence belongs to the G-protein coupled receptor 1 family.

It is found in the cell membrane. In terms of biological role, receptor for extracellular ATP, UTP, CTP, GTP and ITP. The activity of this receptor is mediated by G proteins which activate a phosphatidylinositol-calcium second messenger system. May play a key role in the early development of neural tissue. The chain is P2Y purinoceptor 4 (p2ry4) from Xenopus laevis (African clawed frog).